Reading from the N-terminus, the 717-residue chain is Polyribonucleotide nucleotidyltransferase (717 aa).

The Mg(2+) site is built by aspartate 486 and aspartate 492. Residues 553-612 enclose the KH domain; that stretch reads PRMITVKINPEKIRDVIGKGGSTIQALTKETGCTIDIQEDGTITIASTSSEGMAEAKRRI. Residues 622–690 form the S1 motif domain; that stretch reads GKIYSGTVLK…EKGRMRLSIK (69 aa). Residues 690-717 are disordered; the sequence is KAAKAEEGDVPATAPQAPGAGDATSQQQ.

This sequence belongs to the polyribonucleotide nucleotidyltransferase family. Mg(2+) serves as cofactor.

Its subcellular location is the cytoplasm. It catalyses the reaction RNA(n+1) + phosphate = RNA(n) + a ribonucleoside 5'-diphosphate. Its function is as follows. Involved in mRNA degradation. Catalyzes the phosphorolysis of single-stranded polyribonucleotides processively in the 3'- to 5'-direction. The sequence is that of Polyribonucleotide nucleotidyltransferase from Ralstonia nicotianae (strain ATCC BAA-1114 / GMI1000) (Ralstonia solanacearum).